Here is a 381-residue protein sequence, read N- to C-terminus: Tafazzin (381 aa).

Residues 1-25 (MSFRDVLERGDEFLEAYPRRSPLWR) lie on the Mitochondrial intermembrane side of the membrane. Residues 26–47 (FLSYSTSLLTFGVSKLLLFTCY) lie within the membrane without spanning it. The Mitochondrial intermembrane segment spans residues 48–381 (NVKLNGFEKL…PEGKPKGKDD (334 aa)). The short motif at 77–82 (HMSMVD) is the HXXXXD motif element. Positions 215–232 (LEATKPPIVVPIFATGFE) are required for membrane insertion.

The protein belongs to the taffazin family.

The protein localises to the mitochondrion outer membrane. Its subcellular location is the mitochondrion inner membrane. It carries out the reaction 1'-[1,2-diacyl-sn-glycero-3-phospho],3'-[1-acyl-sn-glycero-3-phospho]-glycerol + a 1,2-diacyl-sn-glycero-3-phosphocholine = a cardiolipin + a 1-acyl-sn-glycero-3-phosphocholine. The catalysed reaction is 1,2-di-(9Z,12Z-octadecadienoyl)-sn-glycero-3-phosphocholine + 1'-[1,2-di-(9Z,12Z-octadecadienoyl)-sn-glycero-3-phospho]-3'-[1-(9Z,12Z-octadecadienoyl)-sn-glycero-3-phospho]-glycerol = 1-(9Z,12Z)-octadecadienoyl-sn-glycero-3-phosphocholine + 1',3'-bis-[1,2-di-(9Z,12Z-octadecadienoyl)-sn-glycero-3-phospho]-glycerol. The enzyme catalyses 1'-[1,2-di-(9Z-octadecenoyl)-sn-glycero-3-phospho]-3'-[1-(9Z-octadecenoyl)-2-hexadecanoyl-sn-glycero-3-phospho]-glycerol + 1-hexadecanoyl-sn-glycero-3-phosphocholine = 1'-[1,2-di-(9Z-octadecenoyl)-sn-glycero-3-phospho]-3'-[1-(9Z-octadecenoyl)-sn-glycero-3-phospho]-glycerol + 1,2-dihexadecanoyl-sn-glycero-3-phosphocholine. It catalyses the reaction 1'-[1,2-di-(9Z-octadecenoyl)-sn-glycero-3-phospho]-3'-[1-(9Z-octadecenoyl)-2-(9Z-hexadecenoyl)-sn-glycero-3-phospho]-glycerol + 1-(9Z-hexadecenoyl)-sn-glycero-3-phosphocholine = 1,2-di-(9Z-hexadecenoyl)-sn-glycero-3-phosphocholine + 1'-[1,2-di-(9Z-octadecenoyl)-sn-glycero-3-phospho]-3'-[1-(9Z-octadecenoyl)-sn-glycero-3-phospho]-glycerol. It carries out the reaction 1',3'-bis[1,2-di-(9Z-octadecenoyl)-sn-glycero-3-phospho]-glycerol + 1-(9Z-octadecenoyl)-sn-glycero-3-phosphocholine = 1'-[1,2-di-(9Z-octadecenoyl)-sn-glycero-3-phospho]-3'-[1-(9Z-octadecenoyl)-sn-glycero-3-phospho]-glycerol + 1,2-di-(9Z-octadecenoyl)-sn-glycero-3-phosphocholine. The catalysed reaction is 1'-[1,2-di-(9Z-octadecenoyl)-sn-glycero-3-phospho]-3'-[1-(9Z-octadecenoyl)-2-(9Z,12Z-octadecadienoyl)-sn-glycero-3-phospho]-glycerol + 1-(9Z,12Z)-octadecadienoyl-sn-glycero-3-phosphocholine = 1,2-di-(9Z,12Z-octadecadienoyl)-sn-glycero-3-phosphocholine + 1'-[1,2-di-(9Z-octadecenoyl)-sn-glycero-3-phospho]-3'-[1-(9Z-octadecenoyl)-sn-glycero-3-phospho]-glycerol. The enzyme catalyses 1'-[1,2-di-(9Z-octadecenoyl)-sn-glycero-3-phospho]-3'-[1-(9Z-octadecenoyl)-2-(9Z-hexadecenoyl)-sn-glycero-3-phospho]-glycerol + 1-hexadecanoyl-sn-glycero-3-phosphocholine = 1-hexadecanoyl-2-(9Z-hexadecenoyl)-sn-glycero-3-phosphocholine + 1'-[1,2-di-(9Z-octadecenoyl)-sn-glycero-3-phospho]-3'-[1-(9Z-octadecenoyl)-sn-glycero-3-phospho]-glycerol. It catalyses the reaction 1'-[1,2-di-(9Z-octadecenoyl)-sn-glycero-3-phospho]-3'-[1-(9Z-octadecenoyl)-2-hexadecanoyl-sn-glycero-3-phospho]-glycerol + 1-(9Z-hexadecenoyl)-sn-glycero-3-phosphocholine = 1-(9Z-hexadecenoyl)-2-hexadecanoyl-sn-glycero-3-phosphocholine + 1'-[1,2-di-(9Z-octadecenoyl)-sn-glycero-3-phospho]-3'-[1-(9Z-octadecenoyl)-sn-glycero-3-phospho]-glycerol. It carries out the reaction 2 1'-[1,2-diacyl-sn-glycero-3-phospho],3'-[1-acyl-sn-glycero-3-phospho]-glycerol = 1',3'-bis-[1-acyl-sn-glycero-3-phospho]-glycerol + a cardiolipin. The catalysed reaction is 2 1'-[1,2-di-(9Z-octadecenoyl)-sn-glycero-3-phospho]-3'-[1-(9Z-octadecenoyl)-sn-glycero-3-phospho]-glycerol = 1',3'-bis-[1-(9Z-octadecenoyl)-sn-glycero-3-phospho]-glycerol + 1',3'-bis[1,2-di-(9Z-octadecenoyl)-sn-glycero-3-phospho]-glycerol. The enzyme catalyses 1,2-di-(9Z-hexadecenoyl)-sn-glycero-3-phosphocholine + 1-hexadecanoyl-sn-glycero-3-phosphocholine = 1-hexadecanoyl-2-(9Z-hexadecenoyl)-sn-glycero-3-phosphocholine + 1-(9Z-hexadecenoyl)-sn-glycero-3-phosphocholine. It catalyses the reaction 1'-[1,2-di-(9Z,12Z-octadecadienoyl)-sn-glycero-3-phospho]-3'-[1-(9Z,12Z-octadecadienoyl)-sn-glycero-3-phospho]-glycerol + 1,2-di-(9Z-octadecenoyl)-sn-glycero-3-phosphocholine = 1'-[1,2-di-(9Z,12Z-octadecadienoyl)-sn-glycero-3-phospho]-3'-[1-(9Z,12Z-octadecadienoyl)-2-(9Z-octadecenoyl)-sn-glycero-3-phospho]-glycerol + 1-(9Z-octadecenoyl)-sn-glycero-3-phosphocholine. It functions in the pathway phospholipid metabolism. Its function is as follows. Acyltransferase required to remodel newly synthesized phospholipid cardiolipin (1',3'-bis-[1,2-diacyl-sn-glycero-3-phospho]-glycerol or CL), a key component of the mitochondrial inner membrane, with tissue specific acyl chains necessary for adequate mitochondrial function. Its role in cellular physiology is to improve mitochondrial performance. CL is critical for the coassembly of lipids and proteins in mitochondrial membranes, for instance, remodeling of the acyl groups of CL in the mitochondrial inner membrane affects the assembly and stability of respiratory chain complex IV and its supercomplex forms. Catalyzes the transacylation between phospholipids and lysophospholipids, with the highest rate being between phosphatidylcholine (1,2-diacyl-sn-glycero-3-phosphocholine or PC) and CL. Catalyzes both 1-acyl-sn-glycero-3-phosphocholine (lysophosphatidylcholine or LPC) reacylation and PC-CL transacylation, that means, it exchanges acyl groups between CL and PC by a combination of forward and reverse transacylations. Also catalyzes transacylations between other phospholipids such as phosphatidylethanolamine (1,2-diacyl-sn-glycero-3-phosphoethanolamine or PE) and CL, between PC and PE, and between PC and phosphatidate (1,2-diacyl-sn-glycero-3-phosphate or PA), although at lower rate. Not regiospecific, it transfers acyl groups into any of the sn-1 and sn-2 positions of the monolysocardiolipin (MLCL), which is an important prerequisite for uniformity and symmetry in CL acyl distribution. Cannot transacylate dilysocardiolipin (DLCL), thus, the role of MLCL is limited to that of an acyl acceptor. CoA-independent, it can reshuffle molecular species within a single phospholipid class. Redistributes fatty acids between MLCL, CL, and other lipids, which prolongs the half-life of CL. Its action is completely reversible, which allows for cyclic changes, such as fission and fusion or bending and flattening of the membrane. Hence, by contributing to the flexibility of the lipid composition, it plays an important role in the dynamics of mitochondria membranes. Essential for the final stage of spermatogenesis, spermatid individualization. Required for the initiation of mitophagy. The protein is Tafazzin (TAZ1) of Saccharomyces cerevisiae (strain ATCC 204508 / S288c) (Baker's yeast).